A 520-amino-acid chain; its full sequence is MTELIKLSAAALAAKLASGEVTSVQVTQAYLDRIALVDGELNAFLHLNAEEALRVAAEVDADRAAGKELHELAGVPIAIKDLIVTKGQPTTAGSKILEGWISPYDATVIEKIRAAKMPILGKTNLDEFAMGSSTEHSAFGPTRNPWDLTRIPGGSGGGSAAAVAAFEAPLALGTDTGGSIRQPGAVTGTVGVKPTYGGVSRYGAIAMASSLDQIGPVSRTVLDAALLQEVIGGHDPKDSTSLVDPINGQTGCTGLADAARLGANGDLTGVRIGVVKELGGEGYQEGVEVRFRESLELLRGAGAEIVEVSCPSFGYALGAYYLIMPSEASSNLAKFDGVRFGLRKLPEDGPMTIERVMSATRAAGFGNEVKRRIILGAYALSAGYYDAYYGSAQKFRTLIQRDFEAAFAQADVLISPTAPTTAFKFGEKMADPLAMYLNDVATIPANLAGVPGMSLPNGLADEDGLPSGIQLLAPAREDALMYRVGAALEALHEAQWGGPILDRAPELGAASNATAVEGTK.

Active-site charge relay system residues include lysine 80 and serine 155. Serine 179 serves as the catalytic Acyl-ester intermediate.

It belongs to the amidase family. GatA subfamily. In terms of assembly, heterotrimer of A, B and C subunits.

The enzyme catalyses L-glutamyl-tRNA(Gln) + L-glutamine + ATP + H2O = L-glutaminyl-tRNA(Gln) + L-glutamate + ADP + phosphate + H(+). Allows the formation of correctly charged Gln-tRNA(Gln) through the transamidation of misacylated Glu-tRNA(Gln) in organisms which lack glutaminyl-tRNA synthetase. The reaction takes place in the presence of glutamine and ATP through an activated gamma-phospho-Glu-tRNA(Gln). The chain is Glutamyl-tRNA(Gln) amidotransferase subunit A from Renibacterium salmoninarum (strain ATCC 33209 / DSM 20767 / JCM 11484 / NBRC 15589 / NCIMB 2235).